The sequence spans 153 residues: Glucose-6-phosphate 1-dehydrogenase (153 aa).

NADP(+) is bound by residues R21 and K120. K120 is a D-glucose 6-phosphate binding site.

The protein belongs to the glucose-6-phosphate dehydrogenase family.

It localises to the cytoplasm. The protein resides in the cytosol. It carries out the reaction D-glucose 6-phosphate + NADP(+) = 6-phospho-D-glucono-1,5-lactone + NADPH + H(+). The protein operates within carbohydrate degradation; pentose phosphate pathway; D-ribulose 5-phosphate from D-glucose 6-phosphate (oxidative stage): step 1/3. Functionally, cytosolic glucose-6-phosphate dehydrogenase that catalyzes the first and rate-limiting step of the oxidative branch within the pentose phosphate pathway/shunt, an alternative route to glycolysis for the dissimilation of carbohydrates and a major source of reducing power and metabolic intermediates for fatty acid and nucleic acid biosynthetic processes. The protein is Glucose-6-phosphate 1-dehydrogenase (ZW) of Hyalophora cecropia (Cecropia moth).